We begin with the raw amino-acid sequence, 256 residues long: Small ribosomal subunit protein eS1A (256 aa).

Alanine 2 carries the post-translational modification N-acetylalanine; partial.

This sequence belongs to the eukaryotic ribosomal protein eS1 family. Component of the small ribosomal subunit. Mature ribosomes consist of a small (40S) and a large (60S) subunit. The 40S subunit contains about 33 different proteins and 1 molecule of RNA (18S). The 60S subunit contains about 49 different proteins and 3 molecules of RNA (25S, 5.8S and 5S).

It localises to the cytoplasm. In Clavispora lusitaniae (strain ATCC 42720) (Yeast), this protein is Small ribosomal subunit protein eS1A.